The sequence spans 196 residues: Superoxide dismutase [Fe] (196 aa).

Fe cation contacts are provided by histidine 20, histidine 68, aspartate 157, and histidine 161.

The protein belongs to the iron/manganese superoxide dismutase family. Homotetramer. Fe cation serves as cofactor.

It carries out the reaction 2 superoxide + 2 H(+) = H2O2 + O2. Its function is as follows. Destroys superoxide anion radicals which are normally produced within the cells and which are toxic to biological systems. In Tetrahymena pyriformis, this protein is Superoxide dismutase [Fe].